The chain runs to 221 residues: Urease accessory protein UreE (221 aa).

The span at 171 to 180 shows a compositional bias: basic and acidic residues; it reads HHGHDHDHGH. The interval 171-221 is disordered; it reads HHGHDHDHGHSHSHSHSHSHSHSHSHDHDHDHDHEHDVKGHVHGPGCGHKH. The segment covering 181–193 has biased composition (basic residues); it reads SHSHSHSHSHSHS. A compositionally biased stretch (basic and acidic residues) spans 194 to 210; sequence HSHDHDHDHDHEHDVKG.

The protein belongs to the UreE family.

The protein localises to the cytoplasm. Involved in urease metallocenter assembly. Binds nickel. Probably functions as a nickel donor during metallocenter assembly. In Cupriavidus pinatubonensis (strain JMP 134 / LMG 1197) (Cupriavidus necator (strain JMP 134)), this protein is Urease accessory protein UreE.